A 394-amino-acid polypeptide reads, in one-letter code: MAKEKFDRSKEHANIGTIGHVDHGKTTLTAAIATVLAKNGDTVAQSYDMIDNAPEEKERGITINTAHIEYQTDKRHYAHVDCPGHADYVKNMITGAAQMDGGILVVSAADGPMPQTREHILLSRNVGVPALVVFLNKVDMVDDEELLELVEMEVRDLLSEYDFPGDDVPVIAGSALKALEGDAQYEEKILELMQAVDDYIPTPERDSDKPFMMPVEDVFSITGRGTVATGRVERGQIKVGEEVEIIGIHDTSKTTVTGVEMFRKLLDYAEAGDNIGALLRGVAREDVQRGQVLAAPGSITPHTKFKADVYVLSKDEGGRHTPFFTNYRPQFYFRTTDVTGVVNLPEGTEMVMPGDNVEMTVELIAPIAIEDGTRFSIREGGRTVGSGVVTEIIE.

The tr-type G domain maps to 10–204 (KEHANIGTIG…AVDDYIPTPE (195 aa)). The tract at residues 19–26 (GHVDHGKT) is G1. 19–26 (GHVDHGKT) contributes to the GTP binding site. Position 26 (Thr26) interacts with Mg(2+). Residues 60–64 (GITIN) form a G2 region. The tract at residues 81 to 84 (DCPG) is G3. GTP contacts are provided by residues 81–85 (DCPGH) and 136–139 (NKVD). The tract at residues 136 to 139 (NKVD) is G4. The segment at 174 to 176 (SAL) is G5.

This sequence belongs to the TRAFAC class translation factor GTPase superfamily. Classic translation factor GTPase family. EF-Tu/EF-1A subfamily. As to quaternary structure, monomer.

Its subcellular location is the cytoplasm. The enzyme catalyses GTP + H2O = GDP + phosphate + H(+). GTP hydrolase that promotes the GTP-dependent binding of aminoacyl-tRNA to the A-site of ribosomes during protein biosynthesis. The sequence is that of Elongation factor Tu from Staphylococcus haemolyticus (strain JCSC1435).